Reading from the N-terminus, the 163-residue chain is Cytochrome b6-f complex subunit 4 (163 aa).

The next 3 membrane-spanning stretches (helical) occupy residues leucine 36–valine 56, leucine 95–glutamate 115, and threonine 131–isoleucine 151.

This sequence belongs to the cytochrome b family. PetD subfamily. In terms of assembly, the 4 large subunits of the cytochrome b6-f complex are cytochrome b6, subunit IV (17 kDa polypeptide, petD), cytochrome f and the Rieske protein, while the 4 small subunits are petG, petL, petM and petN. The complex functions as a dimer.

It localises to the plastid. The protein localises to the chloroplast thylakoid membrane. In terms of biological role, component of the cytochrome b6-f complex, which mediates electron transfer between photosystem II (PSII) and photosystem I (PSI), cyclic electron flow around PSI, and state transitions. The sequence is that of Cytochrome b6-f complex subunit 4 from Phalaenopsis aphrodite subsp. formosana (Moth orchid).